Reading from the N-terminus, the 319-residue chain is Pantothenate kinase (319 aa).

96–103 (GSVAVGKS) contributes to the ATP binding site.

It belongs to the prokaryotic pantothenate kinase family.

Its subcellular location is the cytoplasm. It carries out the reaction (R)-pantothenate + ATP = (R)-4'-phosphopantothenate + ADP + H(+). It functions in the pathway cofactor biosynthesis; coenzyme A biosynthesis; CoA from (R)-pantothenate: step 1/5. This chain is Pantothenate kinase (coaA), found in Bacillus subtilis (strain 168).